The following is a 104-amino-acid chain: Cytochrome c-551 (104 aa).

Residues methionine 1 to alanine 22 form the signal peptide. Cysteine 34, cysteine 37, histidine 38, and methionine 83 together coordinate heme c.

In terms of processing, binds 1 heme c group covalently per subunit.

Its subcellular location is the periplasm. In terms of biological role, electron donor for cytochrome cd1 in nitrite and nitrate respiration. This is Cytochrome c-551 (nirM) from Stutzerimonas stutzeri (Pseudomonas stutzeri).